The sequence spans 422 residues: Histidine--tRNA ligase (422 aa).

Belongs to the class-II aminoacyl-tRNA synthetase family. As to quaternary structure, homodimer.

It is found in the cytoplasm. The catalysed reaction is tRNA(His) + L-histidine + ATP = L-histidyl-tRNA(His) + AMP + diphosphate + H(+). This is Histidine--tRNA ligase from Ruthia magnifica subsp. Calyptogena magnifica.